The primary structure comprises 228 residues: Large ribosomal subunit protein bL25 (228 aa).

Residues 198–228 (AAIAEAQSAEAAEEKAEAEAEATNEKNDTEE) are disordered. The segment covering 209-228 (AEEKAEAEAEATNEKNDTEE) has biased composition (basic and acidic residues).

It belongs to the bacterial ribosomal protein bL25 family. CTC subfamily. Part of the 50S ribosomal subunit; part of the 5S rRNA/L5/L18/L25 subcomplex. Contacts the 5S rRNA. Binds to the 5S rRNA independently of L5 and L18.

In terms of biological role, this is one of the proteins that binds to the 5S RNA in the ribosome where it forms part of the central protuberance. This chain is Large ribosomal subunit protein bL25, found in Methylorubrum populi (strain ATCC BAA-705 / NCIMB 13946 / BJ001) (Methylobacterium populi).